Reading from the N-terminus, the 1601-residue chain is Replicase large subunit (1601 aa).

Residues Phe50–Ala436 form a methyltransferase region. Positions Ser72–Val280 constitute an Alphavirus-like MT domain. The 160-residue stretch at Leu795 to Arg954 folds into the (+)RNA virus helicase ATP-binding domain. Residues Ile823–Thr1076 form a helicase region. Gly827 to Thr834 contributes to the ATP binding site. The 153-residue stretch at Arg955–Gln1107 folds into the (+)RNA virus helicase C-terminal domain. A RdRp catalytic domain is found at Met1369–Asp1482.

Belongs to the ssRNA positive-strand viruses RNA-directed RNA polymerase family. As to quaternary structure, heterodimer of a large and a small subunit.

It catalyses the reaction RNA(n) + a ribonucleoside 5'-triphosphate = RNA(n+1) + diphosphate. The catalysed reaction is ATP + H2O = ADP + phosphate + H(+). In terms of biological role, is an RNA-dependent RNA polymerase active in viral RNA replication. Is a methyltransferase active in RNA capping and an RNA helicase. Methyltransferase displays a cytoplasmic capping enzyme activity. This function is necessary since all viral RNAs are synthesized in the cytoplasm, and host capping enzymes are restricted to the nucleus. Helicase region probably exhibits NTPase and RNA unwinding activities (Potential). It also acts as a suppressor of RNA-mediated gene silencing, also known as post-transcriptional gene silencing (PTGS), a mechanism of plant viral defense that limits the accumulation of viral RNAs. May mediate silencing suppression through either inhibition of HEN1-mediated siRNA or siRNA demethylation. This chain is Replicase large subunit, found in Brassicaceae (TVCV).